A 109-amino-acid chain; its full sequence is Cell division protein ZapA (109 aa).

Positions 21–100 (PDQRDALNQA…EQALLERGRI (80 aa)) form a coiled coil.

It belongs to the ZapA family. Type 1 subfamily. In terms of assembly, homodimer. Interacts with FtsZ.

The protein resides in the cytoplasm. Functionally, activator of cell division through the inhibition of FtsZ GTPase activity, therefore promoting FtsZ assembly into bundles of protofilaments necessary for the formation of the division Z ring. It is recruited early at mid-cell but it is not essential for cell division. The polypeptide is Cell division protein ZapA (Shigella dysenteriae serotype 1 (strain Sd197)).